Consider the following 122-residue polypeptide: MAITKEDIIKALEEMKLTELNELVKAIEEHFDVVASAGVAVAAGPAVADAAPSEVAIMLTNAGGQKVAVIKVVKEVTGLGLMDAKKLVDGTLPVAIKENVKIEEADAIKAQLIEAGASVEYK.

Belongs to the bacterial ribosomal protein bL12 family. Homodimer. Part of the ribosomal stalk of the 50S ribosomal subunit. Forms a multimeric L10(L12)X complex, where L10 forms an elongated spine to which 2 to 4 L12 dimers bind in a sequential fashion. Binds GTP-bound translation factors.

In terms of biological role, forms part of the ribosomal stalk which helps the ribosome interact with GTP-bound translation factors. Is thus essential for accurate translation. The chain is Large ribosomal subunit protein bL12 from Mesoplasma florum (strain ATCC 33453 / NBRC 100688 / NCTC 11704 / L1) (Acholeplasma florum).